A 378-amino-acid chain; its full sequence is Putative F-box protein At4g17565 (378 aa).

Positions 16 to 63 constitute an F-box domain; it reads PKWSELCPDLLRSIFEQLSFTNLNRAKLVCRSWNSASRGCVPKRNQIP.

This is Putative F-box protein At4g17565 from Arabidopsis thaliana (Mouse-ear cress).